Here is a 121-residue protein sequence, read N- to C-terminus: Transposase InsC for insertion element IS2A (121 aa).

It belongs to the transposase 8 family.

In terms of biological role, involved in the transposition of the insertion sequence IS2. The sequence is that of Transposase InsC for insertion element IS2A (insC1) from Escherichia coli (strain K12).